A 330-amino-acid polypeptide reads, in one-letter code: Flotillin-like protein FloA (330 aa).

2 helical membrane-spanning segments follow: residues 5-25 and 28-48; these read IILP…LFTF and VALW…TLIG.

It belongs to the flotillin-like FloA family. As to quaternary structure, homooligomerizes.

The protein resides in the cell membrane. It localises to the membrane raft. Functionally, found in functional membrane microdomains (FMM) that may be equivalent to eukaryotic membrane rafts. FMMs are highly dynamic and increase in number as cells age. Flotillins are thought to be important factors in membrane fluidity. This Oceanobacillus iheyensis (strain DSM 14371 / CIP 107618 / JCM 11309 / KCTC 3954 / HTE831) protein is Flotillin-like protein FloA.